Consider the following 277-residue polypeptide: Transcription factor WRKY19 (277 aa).

A DNA-binding region (WRKY) is located at residues Q100 to A168.

The protein belongs to the WRKY group III family.

It localises to the nucleus. Its function is as follows. May play a role in defense responses. The sequence is that of Transcription factor WRKY19 from Oryza sativa subsp. japonica (Rice).